The following is a 791-amino-acid chain: Leucine-rich repeat-containing protein SOG2 (791 aa).

A disordered region spans residues 1 to 28 (MVATSSKRTLDPKEEHLPADKTSTNSSN). The segment covering 8 to 19 (RTLDPKEEHLPA) has biased composition (basic and acidic residues). 6 LRR repeats span residues 43-64 (SGTTLKLIALNIKSISDEDVGY), 67-88 (NVERLSLRKNHLTSLPASFKRL), 90-111 (RLQYLDLHNNNFKEIPYILTQC), 113-134 (QLEILDLSSNEIEALPDEISSF), 138-159 (NIRVLSLKDNNVTSIRNLKSIT), and 163-183 (KLSILDLEDNKIPKEELDQVQ). At Thr214 the chain carries Phosphothreonine. Disordered stretches follow at residues 454–506 (ASKA…TPSA) and 534–569 (HTHGPILGHQNAISNGSSQTNMNEVKTTSDTIPRQQ). A compositionally biased stretch (low complexity) spans 469-486 (SSSSITSGGGPAASTTST). Polar residues predominate over residues 544–569 (NAISNGSSQTNMNEVKTTSDTIPRQQ).

The protein localises to the cytoplasm. Its function is as follows. Required for proper cell morphogenesis and cell separation after mitosis. Functions in the RAM (regulation of ACE2 activity and cellular morphogenesis) signaling network and is required for proper ACE2 localization and CBK1 kinase activity. The sequence is that of Leucine-rich repeat-containing protein SOG2 from Saccharomyces cerevisiae (strain ATCC 204508 / S288c) (Baker's yeast).